Reading from the N-terminus, the 757-residue chain is Dapper homolog 2 (757 aa).

The segment at 1-281 (MWAPSGQGPA…QSPLFALPKE (281 aa)) is inhibition of Nodal signaling. Residues 55–107 (RGQELRLEAALTALREQLSRLRRQDAGLKTHLDQLDQQISELQLDVSRSSCEA) adopt a coiled-coil conformation. 3 disordered regions span residues 486 to 540 (RRRV…CSES), 584 to 684 (RWQS…EGCF), and 696 to 728 (AEAG…PPVP). Basic and acidic residues-rich tracts occupy residues 505–516 (ERQRVTERDPSR) and 631–644 (ACAR…EHSA). Positions 645–656 (DCTSLYHSTIAE) are enriched in polar residues. Over residues 664 to 673 (SDHTANRFGD) the composition is skewed to basic and acidic residues. Residues 754-757 (MTMV) carry the PDZ-binding motif.

Belongs to the dapper family. As to quaternary structure, can form homodimers and heterodimers with DACT1 or DACT3. Interacts with CSNK1D, PKA catalytic subunit, PKC-type kinase, CSNK2B, DVL1, DVL2, DVL3, VANGL1, VANGL2, TGFBR1, CTNNB1, CTNND2, CTNND1, LEF1, TCF7, TCF7L1 and HDAC1. Expressed in kidney (inner medullary collecting duct). Expressed in epidermal keratinocytes and hair follicles.

Its function is as follows. Involved in regulation of intracellular signaling pathways during development. Negatively regulates the Nodal signaling pathway, possibly by promoting the lysosomal degradation of Nodal receptors, such as TGFBR1. May be involved in control of the morphogenetic behavior of kidney ureteric bud cells by keeping cells epithelial and restraining their mesenchymal character. May play an inhibitory role in the re-epithelialization of skin wounds by attenuating TGF-beta signaling. This is Dapper homolog 2 (Dact2) from Mus musculus (Mouse).